Reading from the N-terminus, the 1346-residue chain is Adhesion G protein-coupled receptor F5 (1346 aa).

Positions 1–21 (MKSPRRTTLCLMFIVIYSSKA) are cleaved as a signal peptide. At 22-1006 (ALNWNYESTI…MSPDSPDPSS (985 aa)) the chain is on the extracellular side. Asn73, Asn94, Asn106, Asn188, Asn256, Asn272, Asn301, Asn315, Asn328, Asn398, Asn472, Asn487, Asn505, Asn540, Asn627, Asn649, Asn666, Asn820, Asn931, Asn963, and Asn982 each carry an N-linked (GlcNAc...) asparagine glycan. The 108-residue stretch at 166 to 273 (LQEDVTLNMR…NSFQAVTINE (108 aa)) folds into the SEA domain. 3 consecutive Ig-like domains span residues 267–368 (QAVT…IDVM), 369–466 (PIQI…IKVT), and 471–561 (ANLT…KDVI). Intrachain disulfides connect Cys293–Cys350 and Cys391–Cys449. Cys492 and Cys545 are disulfide-bonded. The GAIN-B domain maps to 842 to 1003 (PPLSFSQTNV…SILMSPDSPD (162 aa)). 2 disulfides stabilise this stretch: Cys954-Cys985 and Cys973-Cys987. The segment at 954–1003 (CVFWNFRLANNTGGWDSSGCYVEEGDGDNVTCICDHLTSFSILMSPDSPD) is GPS. Positions 991–1006 (TSFSILMSPDSPDPSS) are tethered agonist. A helical membrane pass occupies residues 1007 to 1027 (LLGILLDIISYVGVGFSILSL). Residues 1028-1053 (AACLVVEAVVWKSVTKNRTSYMRHTC) lie on the Cytoplasmic side of the membrane. A helical membrane pass occupies residues 1054–1074 (IVNIAASLLVANTWFIVVAAI). Over 1075 to 1090 (QDNRYILCKTACVAAT) the chain is Extracellular. A helical membrane pass occupies residues 1091 to 1111 (FFIHFFYLSVFFWMLTLGLML). At 1112-1128 (FYRLVFILHETSRSTQK) the chain is on the cytoplasmic side. Residues 1129–1149 (AIAFCLGYGCPLAISVITLGA) traverse the membrane as a helical segment. The Extracellular segment spans residues 1150–1173 (TQPREVYTRKNVCWLNWEDTKALL). A helical membrane pass occupies residues 1174–1194 (AFAIPALIIVVVNITITIVVI). Residues 1195–1220 (TKILRPSIGDKPCKQEKSSLFQISKS) lie on the Cytoplasmic side of the membrane. Residues 1221–1241 (IGVLTPLLGLTWGFGLTTVFP) form a helical membrane-spanning segment. The Extracellular segment spans residues 1242 to 1244 (GTN). A helical membrane pass occupies residues 1245 to 1265 (LVFHIIFAILNVFQGLFILLF). Residues 1266–1346 (GCLWDLKVQE…NSSSASSLLN (81 aa)) are Cytoplasmic-facing. Thr1300 is subject to Phosphothreonine. The residue at position 1307 (Ser1307) is a Phosphoserine. Positions 1327–1346 (TPEATSSSLENSSSASSLLN) are disordered. Over residues 1329-1346 (EATSSSLENSSSASSLLN) the composition is skewed to low complexity.

This sequence belongs to the G-protein coupled receptor 2 family. Adhesion G-protein coupled receptor (ADGR) subfamily. As to quaternary structure, homodimer; disulfide-linked. Heterodimer of 2 chains generated by proteolytic processing; the large extracellular N-terminal fragment and the membrane-bound C-terminal fragment predominantly remain associated and non-covalently linked. Fragment generates by the processing enzyme furin remains attached to the extracellular N-terminal fragment. Interacts (via N-terminal extracellular domain) with SFTPD. Highly glycosylated. Post-translationally, proteolytically cleaved at multiple sites: one in the GPS region of the GAIN-B domain (S1 site) and the other in the SEA domain (S2 site). The proteolytic cleavage at S1 site generates an extracellular subunit and a seven-transmembrane subunit. The proteolytic cleavage at S2 site generates a fragment that undergoes proteolytic cleavage by the processing enzyme furin. In terms of tissue distribution, expressed in lung endothelial cells and in alveolar type II (ATII) cells (at protein level). Expressed high levels in subcutaneous adipose tissue in lean individuals and at lower levels in visceral fat. Expression levels in subcutaneous adipose tissue drastically drop in obese individuals.

The protein resides in the cell membrane. With respect to regulation, as an adhesion G protein-coupled receptor (aGPCR) exhibits a large N-terminal extracellular domain containing highly conserved GPCR autoproteolysis-inducing (GAIN) domain. During synthesis, intracellular autoproteolytic processing of nascent chain within the GAIN domain generates a mature protein, consisting of an N-terminal fragment that is non-covalently linked to the C-terminal fragment. The mature protein is routed to the plasma membrane where the N- and C-terminal fragments remain associated, forming the holoreceptor. Dissociation of the aGPCR fragments stimulates G protein signaling through the action of the tethered-peptide agonist stalk that is occluded within the GAIN domain in the holoreceptor form. This dissociation might be induced by ligand binding, such as that of sFNDC4. In terms of biological role, adhesion G protein-coupled receptor. In alveolar type II (ATII or AT2) cells, required for normal lung surfactant homeostasis. Modulation of both surfactant secretion and uptake by ATII cells is mediated by the downstream activation of GNAQ/GNA11 proteins and may be a consequence of increased cortical F-actin assembly induced by ADGRF5 activation. In the kidney, may play a role in the regulation of acid excretion into the primary urine, possibly by regulating the surface expression of V-ATPase proton pump. As a receptor for soluble FNDC4 (sFNDC4), required for proper systemic glucose tolerance, specifically sensitizing white adipose tissue to insulin. Also plays a role in sFNDC4-induced decrease of local inflammation in white adipose tissue. In Homo sapiens (Human), this protein is Adhesion G protein-coupled receptor F5.